The primary structure comprises 500 residues: Na(+)/H(+) antiporter NhaB (500 aa).

Helical transmembrane passes span 23–43 (VVIC…GPVA), 53–73 (IFTL…LLLI), 96–116 (VILL…LLLF), 129–149 (AILA…LDAL), 150–170 (TVTA…HRVA), 205–225 (LLMH…VGEP), 238–258 (FVDF…AGLV), 311–331 (ILII…LMVI), 350–370 (FQDA…VAVI), 450–470 (ATPN…APLI), and 477–497 (MVWM…WAVT).

The protein belongs to the NhaB Na(+)/H(+) (TC 2.A.34) antiporter family.

The protein resides in the cell inner membrane. It catalyses the reaction 2 Na(+)(in) + 3 H(+)(out) = 2 Na(+)(out) + 3 H(+)(in). Its function is as follows. Na(+)/H(+) antiporter that extrudes sodium in exchange for external protons. The sequence is that of Na(+)/H(+) antiporter NhaB from Pseudomonas putida (strain ATCC 47054 / DSM 6125 / CFBP 8728 / NCIMB 11950 / KT2440).